The sequence spans 297 residues: Methionyl-tRNA formyltransferase (297 aa).

Residues 31–52 (QPPRAAGRGQKPRPSPVHRAAE) are disordered. 108–111 (SLLP) lines the (6S)-5,6,7,8-tetrahydrofolate pocket.

It belongs to the Fmt family.

The enzyme catalyses L-methionyl-tRNA(fMet) + (6R)-10-formyltetrahydrofolate = N-formyl-L-methionyl-tRNA(fMet) + (6S)-5,6,7,8-tetrahydrofolate + H(+). Functionally, attaches a formyl group to the free amino group of methionyl-tRNA(fMet). The formyl group appears to play a dual role in the initiator identity of N-formylmethionyl-tRNA by promoting its recognition by IF2 and preventing the misappropriation of this tRNA by the elongation apparatus. In Paracoccus denitrificans (strain Pd 1222), this protein is Methionyl-tRNA formyltransferase.